A 520-amino-acid polypeptide reads, in one-letter code: Glucose starvation modulator protein 1 (520 aa).

Positions 20 to 48 (CSFCHSKHLQCSNNRPCKNCVKRNIADQC) form a DNA-binding region, zn(2)-C6 fungal-type. 2 disordered regions span residues 63 to 104 (AKNK…SSGR) and 194 to 213 (PASP…PNEM). Residues 74–85 (SLESSSSPFSPL) show a composition bias toward low complexity. Residues 90 to 104 (INSQSSQPLDPSSGR) show a composition bias toward polar residues. Positions 376 to 445 (DYEKLSHLNS…FKLFKSVAVG (70 aa)) constitute a PAS domain.

This sequence belongs to the ERT1/acuK family.

It localises to the nucleus. In terms of biological role, transcription factor which regulates nonfermentable carbon utilization. In Meyerozyma guilliermondii (strain ATCC 6260 / CBS 566 / DSM 6381 / JCM 1539 / NBRC 10279 / NRRL Y-324) (Yeast), this protein is Glucose starvation modulator protein 1 (GSM1).